Reading from the N-terminus, the 1402-residue chain is DNA-directed RNA polymerase subunit beta' (1402 aa).

4 residues coordinate Zn(2+): Cys71, Cys73, Cys86, and Cys89. 3 residues coordinate Mg(2+): Asp462, Asp464, and Asp466. Zn(2+)-binding residues include Cys811, Cys885, Cys892, and Cys895. Residues 1379-1402 (RKGTGAGSANQMLQDMTDQVPAAE) are disordered. A compositionally biased stretch (polar residues) spans 1385 to 1395 (GSANQMLQDMT).

It belongs to the RNA polymerase beta' chain family. As to quaternary structure, the RNAP catalytic core consists of 2 alpha, 1 beta, 1 beta' and 1 omega subunit. When a sigma factor is associated with the core the holoenzyme is formed, which can initiate transcription. Mg(2+) serves as cofactor. The cofactor is Zn(2+).

It catalyses the reaction RNA(n) + a ribonucleoside 5'-triphosphate = RNA(n+1) + diphosphate. Functionally, DNA-dependent RNA polymerase catalyzes the transcription of DNA into RNA using the four ribonucleoside triphosphates as substrates. The chain is DNA-directed RNA polymerase subunit beta' from Agrobacterium fabrum (strain C58 / ATCC 33970) (Agrobacterium tumefaciens (strain C58)).